A 221-amino-acid polypeptide reads, in one-letter code: CASP-like protein 4B1 (221 aa).

The segment at 1–78 (MAMQLHAASP…HDHHGGGGGG (78 aa)) is disordered. The Cytoplasmic segment spans residues 1 to 87 (MAMQLHAASP…GDEATQLLNG (87 aa)). Residues 19–33 (SPPPPPPLSPHPEPA) are compositionally biased toward pro residues. Residues 50–62 (APVATATTPLTPG) show a composition bias toward low complexity. The chain crosses the membrane as a helical span at residues 88–108 (IVLVLRAGAALLSFVAMALVA). The Extracellular portion of the chain corresponds to 109–125 (SCRHGDWMDFLRYQEYR). Residues 126–146 (YLLGVSVVAFVYSAAQALKNF) traverse the membrane as a helical segment. The Cytoplasmic portion of the chain corresponds to 147-160 (RRRRRGAADASFLD). The chain crosses the membrane as a helical span at residues 161–181 (FAGDQAVAYLLVTASAAALPI). Residues 182–196 (TIRMRSAVVNVFTDA) lie on the Extracellular side of the membrane. Residues 197–217 (IAASIALGFLAFAALALSAML) form a helical membrane-spanning segment. Over 218 to 221 (SRHA) the chain is Cytoplasmic.

It belongs to the Casparian strip membrane proteins (CASP) family. Homodimer and heterodimers.

Its subcellular location is the cell membrane. This Hordeum vulgare subsp. vulgare (Domesticated barley) protein is CASP-like protein 4B1.